The primary structure comprises 175 residues: Ribosome maturation factor RimM (175 aa).

Residues 99 to 171 form the PRC barrel domain; that stretch reads AGEYYWFQLK…RILFDLPDGL (73 aa).

The protein belongs to the RimM family. As to quaternary structure, binds ribosomal protein uS19.

It is found in the cytoplasm. In terms of biological role, an accessory protein needed during the final step in the assembly of 30S ribosomal subunit, possibly for assembly of the head region. Essential for efficient processing of 16S rRNA. May be needed both before and after RbfA during the maturation of 16S rRNA. It has affinity for free ribosomal 30S subunits but not for 70S ribosomes. The chain is Ribosome maturation factor RimM from Syntrophotalea carbinolica (strain DSM 2380 / NBRC 103641 / GraBd1) (Pelobacter carbinolicus).